The sequence spans 233 residues: MSNKKNNIIKIMILGEKEVGKSSLLIRATKDEFNSQYIPTIGIDFDYKIMEIKGEKYKLQIWDYVSHDHINVFNKQVLSNTKIILLLFDLTNKSSFDSINNWLLKLDQSNKDNSIQIFLVGTKSDLISNRQVSLLDIQSKFIQNNNNNNNNNNNNNNNNNNNNNNNNNNNNNSNNNNNNNLQYFEISSKDNNNVEFLFTSVIDYYLLKAQPKFEEEIKNKKKKLKITVSWFDI.

Residue 15–22 coordinates GTP; sequence GEKEVGKS. Positions 37-45 match the Effector region motif; it reads YIPTIGIDF. GTP-binding positions include 63-67 and 122-125; these read DYVSH and TKSD. The disordered stretch occupies residues 143–182; the sequence is QNNNNNNNNNNNNNNNNNNNNNNNNNNNNNSNNNNNNNLQ. Positions 144–180 are enriched in low complexity; sequence NNNNNNNNNNNNNNNNNNNNNNNNNNNNNSNNNNNNN.

It belongs to the small GTPase superfamily. Rab family.

This chain is Ras-related protein RabV (rabV), found in Dictyostelium discoideum (Social amoeba).